The following is a 264-amino-acid chain: 3-methyl-2-oxobutanoate hydroxymethyltransferase 2 (264 aa).

Mg(2+) is bound by residues D44 and D83. 3-methyl-2-oxobutanoate contacts are provided by residues 44–45, D83, and K111; that span reads DS. E113 provides a ligand contact to Mg(2+). E180 acts as the Proton acceptor in catalysis.

Belongs to the PanB family. In terms of assembly, homodecamer; pentamer of dimers. It depends on Mg(2+) as a cofactor.

It localises to the cytoplasm. The catalysed reaction is 3-methyl-2-oxobutanoate + (6R)-5,10-methylene-5,6,7,8-tetrahydrofolate + H2O = 2-dehydropantoate + (6S)-5,6,7,8-tetrahydrofolate. It participates in cofactor biosynthesis; (R)-pantothenate biosynthesis; (R)-pantoate from 3-methyl-2-oxobutanoate: step 1/2. Its function is as follows. Catalyzes the reversible reaction in which hydroxymethyl group from 5,10-methylenetetrahydrofolate is transferred onto alpha-ketoisovalerate to form ketopantoate. The protein is 3-methyl-2-oxobutanoate hydroxymethyltransferase 2 of Hahella chejuensis (strain KCTC 2396).